A 134-amino-acid polypeptide reads, in one-letter code: RxLR effector protein Avh238 (134 aa).

A signal peptide spans Met-1–Ala-21. Positions Arg-44–Arg-68 match the RxLR-dEER motif. The tract at residues Ala-49–Pro-70 is disordered. Residues Asp-61–Pro-70 are compositionally biased toward basic and acidic residues.

Belongs to the RxLR effector family. Interacts with host 1-aminocyclopropane-1-carboxylate synthases ACS1, ACS2, ACS3, ACS10 and ACS12.

The protein localises to the secreted. It localises to the host cytoplasm. It is found in the host nucleus. Its function is as follows. Effector that suppresses plant defense responses during the early stages of pathogen infection. Suppresses cell death induced by effectors and PAMPs in plant hosts. Is able to induced cell death in tomato, tobacco, eggplant, and potato, but not in A.thaliana. Interacts with and destabilizes host 1-aminocyclopropane-1-carboxylate synthases. By suppressing type2 ACS-catalyzed ethylene biosynthesis, Avh238 facilitates Phytophthora infection. In Phytophthora sojae (strain P6497) (Soybean stem and root rot agent), this protein is RxLR effector protein Avh238 (Avh238).